Consider the following 334-residue polypeptide: Heat-inducible transcription repressor HrcA (334 aa).

Belongs to the HrcA family.

Functionally, negative regulator of class I heat shock genes (grpE-dnaK-dnaJ and groELS operons). Prevents heat-shock induction of these operons. This is Heat-inducible transcription repressor HrcA from Verminephrobacter eiseniae (strain EF01-2).